The chain runs to 494 residues: Glycerol kinase (494 aa).

T12 provides a ligand contact to ADP. T12, T13, and S14 together coordinate ATP. T12 provides a ligand contact to sn-glycerol 3-phosphate. R16 is a binding site for ADP. R82, E83, Y135, and D244 together coordinate sn-glycerol 3-phosphate. The glycerol site is built by R82, E83, Y135, D244, and Q245. ADP is bound by residues T266 and G309. T266, G309, Q313, and G409 together coordinate ATP. ADP contacts are provided by G409 and N413.

The protein belongs to the FGGY kinase family.

It catalyses the reaction glycerol + ATP = sn-glycerol 3-phosphate + ADP + H(+). It functions in the pathway polyol metabolism; glycerol degradation via glycerol kinase pathway; sn-glycerol 3-phosphate from glycerol: step 1/1. Its activity is regulated as follows. Inhibited by fructose 1,6-bisphosphate (FBP). Its function is as follows. Key enzyme in the regulation of glycerol uptake and metabolism. Catalyzes the phosphorylation of glycerol to yield sn-glycerol 3-phosphate. The chain is Glycerol kinase from Alteromonas mediterranea (strain DSM 17117 / CIP 110805 / LMG 28347 / Deep ecotype).